The primary structure comprises 61 residues: Large ribosomal subunit protein bL32c (61 aa).

The disordered stretch occupies residues 37–61 (SRSFSSGNEHPKPKGFSGQQQQTNK).

The protein belongs to the bacterial ribosomal protein bL32 family.

The protein localises to the plastid. It is found in the chloroplast. This chain is Large ribosomal subunit protein bL32c, found in Agrostis stolonifera (Creeping bentgrass).